A 160-amino-acid chain; its full sequence is NADH-quinone oxidoreductase subunit B (160 aa).

Cys37, Cys38, Cys102, and Cys132 together coordinate [4Fe-4S] cluster.

The protein belongs to the complex I 20 kDa subunit family. In terms of assembly, NDH-1 is composed of 14 different subunits. Subunits NuoB, C, D, E, F, and G constitute the peripheral sector of the complex. [4Fe-4S] cluster serves as cofactor.

Its subcellular location is the cell inner membrane. The catalysed reaction is a quinone + NADH + 5 H(+)(in) = a quinol + NAD(+) + 4 H(+)(out). Its function is as follows. NDH-1 shuttles electrons from NADH, via FMN and iron-sulfur (Fe-S) centers, to quinones in the respiratory chain. Couples the redox reaction to proton translocation (for every two electrons transferred, four hydrogen ions are translocated across the cytoplasmic membrane), and thus conserves the redox energy in a proton gradient. This is NADH-quinone oxidoreductase subunit B from Neisseria gonorrhoeae (strain ATCC 700825 / FA 1090).